The sequence spans 325 residues: Phospho-N-acetylmuramoyl-pentapeptide-transferase (325 aa).

10 helical membrane-spanning segments follow: residues 9-29, 53-73, 77-97, 112-132, 154-174, 182-202, 204-224, 231-251, 257-277, and 305-325; these read ALLV…PWLL, TMGG…FQAF, TLLL…DDYL, KLLG…AFLG, LGNV…ANAV, GLCS…SLAL, EKGL…FLVY, VFMG…FAVL, FLLL…IQVI, and KIVL…GYGL.

The protein belongs to the glycosyltransferase 4 family. MraY subfamily. Mg(2+) is required as a cofactor.

Its subcellular location is the cell membrane. It catalyses the reaction UDP-N-acetyl-alpha-D-muramoyl-L-alanyl-gamma-D-glutamyl-meso-2,6-diaminopimeloyl-D-alanyl-D-alanine + di-trans,octa-cis-undecaprenyl phosphate = di-trans,octa-cis-undecaprenyl diphospho-N-acetyl-alpha-D-muramoyl-L-alanyl-D-glutamyl-meso-2,6-diaminopimeloyl-D-alanyl-D-alanine + UMP. Its pathway is cell wall biogenesis; peptidoglycan biosynthesis. In terms of biological role, catalyzes the initial step of the lipid cycle reactions in the biosynthesis of the cell wall peptidoglycan: transfers peptidoglycan precursor phospho-MurNAc-pentapeptide from UDP-MurNAc-pentapeptide onto the lipid carrier undecaprenyl phosphate, yielding undecaprenyl-pyrophosphoryl-MurNAc-pentapeptide, known as lipid I. The sequence is that of Phospho-N-acetylmuramoyl-pentapeptide-transferase from Carboxydothermus hydrogenoformans (strain ATCC BAA-161 / DSM 6008 / Z-2901).